The sequence spans 1216 residues: DNA polymerase subunit gamma-1 (1216 aa).

A compositionally biased stretch (low complexity) spans 27–37 (SSSVLDPVPSD). Positions 27 to 50 (SSSVLDPVPSDGQPQSQMPSSENG) are disordered. Residues 38–50 (GQPQSQMPSSENG) show a composition bias toward polar residues. Residues 179 to 183 (VFDVE) carry the Exo I motif. The active-site Exonuclease activity is the Asp181. Positions 250–258 (VGHNVSFDR) match the Exo II motif. Ser289 contributes to the DNA binding site. Residues 301-314 (GKHKTQHPTKRGQK) are compositionally biased toward basic residues. The segment at 301–321 (GKHKTQHPTKRGQKSQKNANG) is disordered. The Exo III motif lies at 377 to 385 (YCARDVWAT). Residues 488–518 (TASASKLPIEGAGPFGDPMDQEDPGPPSEEE) are disordered. Residues 491 to 552 (ASKLPIEGAG…RPQHLPGHPG (62 aa)) form an accessory-interacting determinant region. Residues 506 to 518 (MDQEDPGPPSEEE) show a composition bias toward acidic residues. Position 560 (Arg560) interacts with RNA. Ser574 contributes to the DNA binding site. RNA-binding residues include His731, Gly740, and Lys745. DNA contacts are provided by Lys783 and Thr826. Residues 835–841 (TWLTASN) form a trigger loop region. RNA is bound by residues Ser840 and Arg846. Positions 864-873 (VGADVDSQEL) match the Pol A motif. Asp867, Val868, Ser870, Glu872, Arg920, Lys924, and Tyr928 together coordinate a 2'-deoxyribonucleoside 5'-triphosphate. Mg(2+) contacts are provided by Asp867 and Val868. A Pol B motif is present at residues 920 to 935 (REHAKVFNYGRIYGAG). Thr1071 and Ser1072 together coordinate DNA. Residues 1111–1118 (HDEVRYLV) carry the Pol C motif. Asp1112 is an a 2'-deoxyribonucleoside 5'-triphosphate binding site. A Mg(2+)-binding site is contributed by Asp1112.

It belongs to the DNA polymerase type-A family. As to quaternary structure, heterotrimer composed of a catalytic subunit and a homodimer of accessory subunits (POLG:POLG2). Interacts with TTC3. Interacts with LIG3. Mg(2+) serves as cofactor.

Its subcellular location is the mitochondrion. The protein localises to the mitochondrion matrix. It localises to the mitochondrion nucleoid. It carries out the reaction DNA(n) + a 2'-deoxyribonucleoside 5'-triphosphate = DNA(n+1) + diphosphate. The catalysed reaction is a 3'-end 2'-deoxyribonucleotidyl-deoxyribonucleotide-DNA + H2O = a 3'-end 2'-deoxyribonucleotide-DNA + a 2'-deoxyribonucleoside 5'-phosphate + H(+). It catalyses the reaction a 5'-end 2'-deoxyribose-2'-deoxyribonucleotide-DNA = (2E,4S)-4-hydroxypenten-2-al-5-phosphate + a 5'-end 5'-phospho-2'-deoxyribonucleoside-DNA + H(+). Its activity is regulated as follows. Inhibited by dideoxynucleotides such as antiviral agent zalcitabine. Its function is as follows. Catalytic subunit of DNA polymerase gamma solely responsible for replication of mitochondrial DNA (mtDNA). Replicates both heavy and light strands of the circular mtDNA genome using a single-stranded DNA template, RNA primers and the four deoxyribonucleoside triphosphates as substrates. Has 5' -&gt; 3' polymerase activity. Functionally interacts with TWNK and SSBP1 at the replication fork to form a highly processive replisome, where TWNK unwinds the double-stranded DNA template prior to replication and SSBP1 covers the parental heavy strand to enable continuous replication of the entire mitochondrial genome. A single nucleotide incorporation cycle includes binding of the incoming nucleotide at the insertion site, a phosphodiester bond formation reaction that extends the 3'-end of the primer DNA, and translocation of the primer terminus to the post-insertion site. After completing replication of a mtDNA strand, mediates 3' -&gt; 5' exonucleolytic degradation at the nick to enable proper ligation. Highly accurate due to high nucleotide selectivity and 3' -&gt; 5' exonucleolytic proofreading. Proficiently corrects base substitutions, single-base additions and deletions in non-repetitive sequences and short repeats, but displays lower proofreading activity when replicating longer homopolymeric stretches. Exerts exonuclease activity toward single-stranded DNA and double-stranded DNA containing 3'-terminal mispairs. When a misincorporation occurs, transitions from replication to a pro-nucleolytic editing mode and removes the missincorporated nucleoside in the exonuclease active site. Proceeds via an SN2 nucleolytic mechanism in which Asp-198 catalyzes phosphodiester bond hydrolysis and Glu-200 stabilizes the leaving group. As a result the primer strand becomes one nucleotide shorter and is positioned in the post-insertion site, ready to resume DNA synthesis. Exerts 5'-deoxyribose phosphate (dRP) lyase activity and mediates repair-associated mtDNA synthesis (gap filling) in base-excision repair pathway. Catalyzes the release of the 5'-terminal 2-deoxyribose-5-phosphate sugar moiety from incised apurinic/apyrimidinic (AP) sites to produce a substrate for DNA ligase. The dRP lyase reaction does not require divalent metal ions and likely proceeds via a Schiff base intermediate in a beta-elimination reaction mechanism. This chain is DNA polymerase subunit gamma-1, found in Rattus norvegicus (Rat).